We begin with the raw amino-acid sequence, 657 residues long: Glycogen debranching enzyme (657 aa).

The Nucleophile role is filled by D336. The Proton donor role is filled by E371. Residues N458 to D467 show a composition bias toward basic and acidic residues. The tract at residues N458–K479 is disordered.

It belongs to the glycosyl hydrolase 13 family.

It catalyses the reaction Hydrolysis of (1-&gt;6)-alpha-D-glucosidic linkages to branches with degrees of polymerization of three or four glucose residues in limit dextrin.. The protein operates within glycan degradation; glycogen degradation. Its function is as follows. Removes maltotriose and maltotetraose chains that are attached by 1,6-alpha-linkage to the limit dextrin main chain, generating a debranched limit dextrin. This is Glycogen debranching enzyme from Escherichia coli O8 (strain IAI1).